Here is a 207-residue protein sequence, read N- to C-terminus: dITP/XTP pyrophosphatase (207 aa).

A substrate-binding site is contributed by 11 to 16 (TGNPGK). Aspartate 72 functions as the Proton acceptor in the catalytic mechanism. Residue aspartate 72 participates in Mg(2+) binding. Substrate contacts are provided by residues serine 73, 154–157 (FGYD), lysine 177, and 182–183 (HR).

This sequence belongs to the HAM1 NTPase family. As to quaternary structure, homodimer. Mg(2+) is required as a cofactor.

The catalysed reaction is XTP + H2O = XMP + diphosphate + H(+). It catalyses the reaction dITP + H2O = dIMP + diphosphate + H(+). The enzyme catalyses ITP + H2O = IMP + diphosphate + H(+). Its function is as follows. Pyrophosphatase that catalyzes the hydrolysis of nucleoside triphosphates to their monophosphate derivatives, with a high preference for the non-canonical purine nucleotides XTP (xanthosine triphosphate), dITP (deoxyinosine triphosphate) and ITP. Seems to function as a house-cleaning enzyme that removes non-canonical purine nucleotides from the nucleotide pool, thus preventing their incorporation into DNA/RNA and avoiding chromosomal lesions. The sequence is that of dITP/XTP pyrophosphatase from Thermus thermophilus (strain ATCC 27634 / DSM 579 / HB8).